We begin with the raw amino-acid sequence, 453 residues long: tRNA modification GTPase MnmE (453 aa).

(6S)-5-formyl-5,6,7,8-tetrahydrofolate-binding residues include arginine 22, glutamate 79, and lysine 119. In terms of domain architecture, TrmE-type G spans 215–376 (GMKVVIAGRP…LKQHLKSLMG (162 aa)). Asparagine 225 provides a ligand contact to K(+). GTP contacts are provided by residues 225–230 (NAGKSS), 244–250 (TDIAGTT), 269–272 (DTAG), and 334–337 (NKAD). Residue serine 229 coordinates Mg(2+). Residues threonine 244, isoleucine 246, and threonine 249 each coordinate K(+). Residue threonine 250 coordinates Mg(2+). Lysine 453 contributes to the (6S)-5-formyl-5,6,7,8-tetrahydrofolate binding site.

Belongs to the TRAFAC class TrmE-Era-EngA-EngB-Septin-like GTPase superfamily. TrmE GTPase family. Homodimer. Heterotetramer of two MnmE and two MnmG subunits. It depends on K(+) as a cofactor.

The protein localises to the cytoplasm. Its function is as follows. Exhibits a very high intrinsic GTPase hydrolysis rate. Involved in the addition of a carboxymethylaminomethyl (cmnm) group at the wobble position (U34) of certain tRNAs, forming tRNA-cmnm(5)s(2)U34. The polypeptide is tRNA modification GTPase MnmE (Shewanella amazonensis (strain ATCC BAA-1098 / SB2B)).